The primary structure comprises 144 residues: Ribosomal RNA large subunit methyltransferase H (144 aa).

S-adenosyl-L-methionine is bound by residues L63, G92, and 111–116; that span reads LSAMTL.

Belongs to the RNA methyltransferase RlmH family. Homodimer.

Its subcellular location is the cytoplasm. It carries out the reaction pseudouridine(1915) in 23S rRNA + S-adenosyl-L-methionine = N(3)-methylpseudouridine(1915) in 23S rRNA + S-adenosyl-L-homocysteine + H(+). Its function is as follows. Specifically methylates the pseudouridine at position 1915 (m3Psi1915) in 23S rRNA. The chain is Ribosomal RNA large subunit methyltransferase H from Prochlorococcus marinus (strain MIT 9313).